Reading from the N-terminus, the 619-residue chain is Probable pectinesterase/pectinesterase inhibitor 25 (619 aa).

The signal sequence occupies residues 1–23 (MKMQTLNFTSSLLFLSFIFLSCA). Residues 31 to 84 (SPSQPHSEPPSQLPFEPPVESPFFPPSQPPIFVPPSQPPSLPPSQSQSPSLACK) form a disordered region. Pro residues predominate over residues 37–72 (SEPPSQLPFEPPVESPFFPPSQPPIFVPPSQPPSLP). Residues 73-231 (PSQSQSPSLA…TRLYSISLGL (159 aa)) form a pectinesterase inhibitor 25 region. 5 N-linked (GlcNAc...) asparagine glycosylation sites follow: Asn-220, Asn-255, Asn-312, Asn-325, and Asn-364. The segment at 302–601 (AVIVGPFKSD…FTVYNFTMGD (300 aa)) is pectinesterase 25. Substrate is bound at residue Thr-380. Asn-382 carries an N-linked (GlcNAc...) asparagine glycan. Gln-410 provides a ligand contact to substrate. Catalysis depends on Asp-433, which acts as the Proton donor; for pectinesterase activity. An intrachain disulfide couples Cys-447 to Cys-467. Residue Asp-454 is the Nucleophile; for pectinesterase activity of the active site. N-linked (GlcNAc...) asparagine glycosylation occurs at Asn-500. Positions 522 and 524 each coordinate substrate. Asn-550, Asn-591, and Asn-596 each carry an N-linked (GlcNAc...) asparagine glycan.

The protein in the N-terminal section; belongs to the PMEI family. It in the C-terminal section; belongs to the pectinesterase family. Expressed in siliques.

The protein localises to the secreted. Its subcellular location is the cell wall. It catalyses the reaction [(1-&gt;4)-alpha-D-galacturonosyl methyl ester](n) + n H2O = [(1-&gt;4)-alpha-D-galacturonosyl](n) + n methanol + n H(+). The protein operates within glycan metabolism; pectin degradation; 2-dehydro-3-deoxy-D-gluconate from pectin: step 1/5. Functionally, acts in the modification of cell walls via demethylesterification of cell wall pectin. This chain is Probable pectinesterase/pectinesterase inhibitor 25 (PME25), found in Arabidopsis thaliana (Mouse-ear cress).